We begin with the raw amino-acid sequence, 239 residues long: Ribonuclease PH (239 aa).

Phosphate-binding positions include arginine 86 and 124-126; that span reads GTR.

Belongs to the RNase PH family. As to quaternary structure, homohexameric ring arranged as a trimer of dimers.

It carries out the reaction tRNA(n+1) + phosphate = tRNA(n) + a ribonucleoside 5'-diphosphate. Functionally, phosphorolytic 3'-5' exoribonuclease that plays an important role in tRNA 3'-end maturation. Removes nucleotide residues following the 3'-CCA terminus of tRNAs; can also add nucleotides to the ends of RNA molecules by using nucleoside diphosphates as substrates, but this may not be physiologically important. Probably plays a role in initiation of 16S rRNA degradation (leading to ribosome degradation) during starvation. This is Ribonuclease PH from Rhizobium johnstonii (strain DSM 114642 / LMG 32736 / 3841) (Rhizobium leguminosarum bv. viciae).